A 415-amino-acid chain; its full sequence is S-inosyl-L-homocysteine hydrolase (415 aa).

Residues Asp-123 and Glu-148 each coordinate substrate. Thr-149 to Thr-151 contacts NAD(+). Residues Lys-178 and Asp-182 each coordinate substrate. Residues Asn-183, Gly-212–Gly-217, Glu-235, Ala-291–His-293, and Asn-337 contribute to the NAD(+) site.

The protein belongs to the adenosylhomocysteinase family. Exists both as a homotetramer and a homodimer, in a 4:1 ratio. NAD(+) is required as a cofactor.

It localises to the cytoplasm. The enzyme catalyses S-inosyl-L-homocysteine + H2O = L-homocysteine + inosine. It functions in the pathway amino-acid biosynthesis; S-adenosyl-L-methionine biosynthesis. Catalyzes the hydrolysis of S-inosyl-L-homocysteine (SIH) to L-homocysteine (Hcy) and inosine. Likely functions in a S-adenosyl-L-methionine (SAM) recycling pathway from S-adenosyl-L-homocysteine (SAH) produced from SAM-dependent methylation reactions. Can also catalyze the reverse reaction in vitro, i.e. the synthesis of SIH from Hcy and inosine. Is specific for SIH and inosine as it is unable to either hydrolyze SAH or synthesize SAH from adenosine and Hcy. The chain is S-inosyl-L-homocysteine hydrolase from Methanocaldococcus jannaschii (strain ATCC 43067 / DSM 2661 / JAL-1 / JCM 10045 / NBRC 100440) (Methanococcus jannaschii).